An 89-amino-acid polypeptide reads, in one-letter code: Arminin 7591 (89 aa).

The signal sequence occupies residues 1 to 18; it reads MRSAFAVLFLALIAITYS. The propeptide occupies 19–58; the sequence is KNYEDVKEEIKNEVENEILKDLEEDVNEFDDNVQEEVNDA. The residue at position 86 (L86) is a Leucine amide.

This sequence belongs to the arminin family. As to expression, expressed in entodermal epithelium along the body column.

Its subcellular location is the secreted. The protein resides in the target cell membrane. Its function is as follows. Antimicrobial peptide with a broad-spectrum antimicrobial activity. Keeps its antibacterial activity under a wide range of salt concentrations that mimic physiological conditions of human blood, which is surprising, since Hydra is an obligate freshwater animal with nearly no salt tolerance. Does not affect red blood cells. This chain is Arminin 7591, found in Hydra vulgaris (Hydra).